The chain runs to 100 residues: Putative pterin-4-alpha-carbinolamine dehydratase (100 aa).

This sequence belongs to the pterin-4-alpha-carbinolamine dehydratase family.

The catalysed reaction is (4aS,6R)-4a-hydroxy-L-erythro-5,6,7,8-tetrahydrobiopterin = (6R)-L-erythro-6,7-dihydrobiopterin + H2O. The polypeptide is Putative pterin-4-alpha-carbinolamine dehydratase (Bradyrhizobium sp. (strain ORS 278)).